A 317-amino-acid polypeptide reads, in one-letter code: MPDSRPDTELSNPQSAKAPLDPHLKALENESIHIFREVAAEFERPVMLYSIGKDSSVLLHLARKAFYPGRVPFPLLHVNTGWKFSEMIAFRDETAKKYDLDLIEHINPRGKAENITPFTHGSAAFTDIMKTEGLRQALDAGQFDAAFGGARRDEEASRAKERIYSFRTPDHRWDPRNQRPELWNIYNGMIRKGESVRAFPLSNWTEVDIWRYIQAEDIPLVPLYYAKKRPFVERDGMMILAEDPRLELLPGEVRQEGMIRFRTLGDFPLTGAIRSQATTLEEVIAELEIATVSERQGRAIDRDQSGSMEKKKREGYF.

Disordered stretches follow at residues 1–21 (MPDS…APLD) and 298–317 (RAID…EGYF).

Belongs to the PAPS reductase family. CysD subfamily. In terms of assembly, heterodimer composed of CysD, the smaller subunit, and CysN.

The enzyme catalyses sulfate + ATP + H(+) = adenosine 5'-phosphosulfate + diphosphate. It functions in the pathway sulfur metabolism; hydrogen sulfide biosynthesis; sulfite from sulfate: step 1/3. Functionally, with CysN forms the ATP sulfurylase (ATPS) that catalyzes the adenylation of sulfate producing adenosine 5'-phosphosulfate (APS) and diphosphate, the first enzymatic step in sulfur assimilation pathway. APS synthesis involves the formation of a high-energy phosphoric-sulfuric acid anhydride bond driven by GTP hydrolysis by CysN coupled to ATP hydrolysis by CysD. This is Sulfate adenylyltransferase subunit 2 from Rhizobium johnstonii (strain DSM 114642 / LMG 32736 / 3841) (Rhizobium leguminosarum bv. viciae).